The following is a 434-amino-acid chain: Probable exopolygalacturonase X (434 aa).

The signal sequence occupies residues 1–23; sequence MKFLHTVAQTATLLLSLGASVEG. The disordered stretch occupies residues 35–54; the sequence is HHPFRPLPASTPRTKTCHVR. 3 N-linked (GlcNAc...) asparagine glycosylation sites follow: N113, N129, and N199. A PbH1 1 repeat occupies 231–252; that stretch reads SSNIVIQNSVVNNGDDCVSFKP. The Proton donor role is filled by D245. C247 and C264 are oxidised to a cystine. N-linked (GlcNAc...) asparagine glycosylation is found at N253 and N265. One copy of the PbH1 2 repeat lies at 254 to 274; it reads STDILVQNMHCNGSHGISVGS. Residue H268 is part of the active site. Residues N292, N297, N329, N354, and N364 are each glycosylated (N-linked (GlcNAc...) asparagine). One copy of the PbH1 3 repeat lies at 327–348; sequence VSNITYDRMYIENVDWAIEVTQ. The stretch at 362–394 is one PbH1 4 repeat; it reads PSNLTISDVHIKNMWGTTSGKRDPNVGTIVCSS. C392 and C398 form a disulfide bridge. 2 N-linked (GlcNAc...) asparagine glycosylation sites follow: N407 and N430.

It belongs to the glycosyl hydrolase 28 family.

The protein localises to the secreted. The catalysed reaction is [(1-&gt;4)-alpha-D-galacturonosyl](n) + H2O = alpha-D-galacturonate + [(1-&gt;4)-alpha-D-galacturonosyl](n-1). In terms of biological role, specific in hydrolyzing the terminal glycosidic bond of polygalacturonic acid and oligogalacturonates. In Aspergillus terreus (strain NIH 2624 / FGSC A1156), this protein is Probable exopolygalacturonase X (pgaX).